The primary structure comprises 269 residues: 3-methyl-2-oxobutanoate hydroxymethyltransferase (269 aa).

Mg(2+) contacts are provided by D46 and D85. 3-methyl-2-oxobutanoate-binding positions include 46-47 (DS), D85, and K114. A Mg(2+)-binding site is contributed by E116. E183 serves as the catalytic Proton acceptor.

The protein belongs to the PanB family. As to quaternary structure, homodecamer; pentamer of dimers. It depends on Mg(2+) as a cofactor.

Its subcellular location is the cytoplasm. The enzyme catalyses 3-methyl-2-oxobutanoate + (6R)-5,10-methylene-5,6,7,8-tetrahydrofolate + H2O = 2-dehydropantoate + (6S)-5,6,7,8-tetrahydrofolate. It functions in the pathway cofactor biosynthesis; (R)-pantothenate biosynthesis; (R)-pantoate from 3-methyl-2-oxobutanoate: step 1/2. In terms of biological role, catalyzes the reversible reaction in which hydroxymethyl group from 5,10-methylenetetrahydrofolate is transferred onto alpha-ketoisovalerate to form ketopantoate. In Methylococcus capsulatus (strain ATCC 33009 / NCIMB 11132 / Bath), this protein is 3-methyl-2-oxobutanoate hydroxymethyltransferase.